Here is a 154-residue protein sequence, read N- to C-terminus: Photosystem II extrinsic protein U, chloroplastic (154 aa).

The transit peptide at 1-36 (MAFISTPLGKVTVKSATVSANRRGLRMQSDSEPVVS) directs the protein to the chloroplast. The N-terminal 25 residues, 37–61 (RRALLSGALAAAVAAALARARPAQA), are a transit peptide targeting the thylakoid.

The protein belongs to the PsbU family. In terms of assembly, PSII is composed of 1 copy each of membrane proteins PsbA, PsbB, PsbC, PsbD, PsbE, PsbF, PsbH, PsbI, PsbJ, PsbK, PsbL, PsbM, PsbT, PsbY, PsbZ, Psb30/Ycf12, at least 3 peripheral proteins of the oxygen-evolving complex and a large number of cofactors. It forms dimeric complexes. The extrinsic subunits in red algae are PsbO (OEC33), PsbQ', cytochrome c-550 and PsbU. Post-translationally, predicted to be translocated into the thylakoid lumen by the Tat system. The position of the first transit peptide cleavage has not been experimentally proven.

It localises to the plastid. Its subcellular location is the chloroplast thylakoid membrane. One of the extrinsic, lumenal subunits of photosystem II (PSII). PSII is a light-driven water plastoquinone oxidoreductase, using light energy to abstract electrons from H(2)O, generating a proton gradient subsequently used for ATP formation. The extrinsic proteins stabilize the structure of photosystem II oxygen-evolving complex (OEC), the ion environment of oxygen evolution and protect the OEC against heat-induced inactivation. The chain is Photosystem II extrinsic protein U, chloroplastic from Cyanidium caldarium (Red alga).